Here is a 379-residue protein sequence, read N- to C-terminus: Wnt inhibitory factor 1 (379 aa).

Positions 1–28 (MARRSAFPAAALWLWSILLCLLALRAEA) are cleaved as a signal peptide. Residues 38 to 177 (LWIDAHQARV…PQNAIFFKTC (140 aa)) form the WIF domain. Asn88 carries an N-linked (GlcNAc...) asparagine glycan. Intrachain disulfides connect Cys140–Cys177, Cys182–Cys192, Cys186–Cys198, Cys200–Cys209, Cys214–Cys224, Cys218–Cys230, and Cys232–Cys241. 5 consecutive EGF-like domains span residues 178–210 (QQAE…PHCE), 211–242 (KALC…VNCD), 243–271 (KANC…LEGE), 274–306 (EISK…DLCS), and 307–338 (KPVC…RHCN). N-linked (GlcNAc...) asparagine glycosylation occurs at Asn245. Disulfide bonds link Cys246–Cys256, Cys250–Cys262, Cys278–Cys288, Cys282–Cys294, Cys296–Cys305, Cys310–Cys320, Cys314–Cys326, and Cys328–Cys337. The interval 354-379 (AQLRQHTPSLKKAEERRDPPESNYIW) is disordered. The span at 364 to 373 (KKAEERRDPP) shows a compositional bias: basic and acidic residues.

As to quaternary structure, interacts with MYOC.

Its subcellular location is the secreted. Binds to WNT proteins and inhibits their activities. May be involved in mesoderm segmentation. The chain is Wnt inhibitory factor 1 (WIF1) from Homo sapiens (Human).